Reading from the N-terminus, the 581-residue chain is Proline--tRNA ligase (581 aa).

Belongs to the class-II aminoacyl-tRNA synthetase family. ProS type 1 subfamily. In terms of assembly, homodimer.

It is found in the cytoplasm. It catalyses the reaction tRNA(Pro) + L-proline + ATP = L-prolyl-tRNA(Pro) + AMP + diphosphate. Its function is as follows. Catalyzes the attachment of proline to tRNA(Pro) in a two-step reaction: proline is first activated by ATP to form Pro-AMP and then transferred to the acceptor end of tRNA(Pro). As ProRS can inadvertently accommodate and process non-cognate amino acids such as alanine and cysteine, to avoid such errors it has two additional distinct editing activities against alanine. One activity is designated as 'pretransfer' editing and involves the tRNA(Pro)-independent hydrolysis of activated Ala-AMP. The other activity is designated 'posttransfer' editing and involves deacylation of mischarged Ala-tRNA(Pro). The misacylated Cys-tRNA(Pro) is not edited by ProRS. The protein is Proline--tRNA ligase of Leptothrix cholodnii (strain ATCC 51168 / LMG 8142 / SP-6) (Leptothrix discophora (strain SP-6)).